The primary structure comprises 388 residues: Succinate--CoA ligase [ADP-forming] subunit beta (388 aa).

The ATP-grasp domain occupies Lys-9–Lys-245. ATP-binding positions include Lys-46, Gly-53–Gly-55, Glu-100, Tyr-103, and Glu-108. Positions 200 and 214 each coordinate Mg(2+). Substrate contacts are provided by residues Asn-265 and Gly-322–Val-324.

It belongs to the succinate/malate CoA ligase beta subunit family. Heterotetramer of two alpha and two beta subunits. It depends on Mg(2+) as a cofactor.

It carries out the reaction succinate + ATP + CoA = succinyl-CoA + ADP + phosphate. The enzyme catalyses GTP + succinate + CoA = succinyl-CoA + GDP + phosphate. The protein operates within carbohydrate metabolism; tricarboxylic acid cycle; succinate from succinyl-CoA (ligase route): step 1/1. Its function is as follows. Succinyl-CoA synthetase functions in the citric acid cycle (TCA), coupling the hydrolysis of succinyl-CoA to the synthesis of either ATP or GTP and thus represents the only step of substrate-level phosphorylation in the TCA. The beta subunit provides nucleotide specificity of the enzyme and binds the substrate succinate, while the binding sites for coenzyme A and phosphate are found in the alpha subunit. The protein is Succinate--CoA ligase [ADP-forming] subunit beta of Acinetobacter baumannii (strain SDF).